Consider the following 486-residue polypeptide: UDP-N-acetylmuramate--L-alanine ligase (486 aa).

Residue 129–135 (GTHGKTT) coordinates ATP.

Belongs to the MurCDEF family.

The protein localises to the cytoplasm. It carries out the reaction UDP-N-acetyl-alpha-D-muramate + L-alanine + ATP = UDP-N-acetyl-alpha-D-muramoyl-L-alanine + ADP + phosphate + H(+). It participates in cell wall biogenesis; peptidoglycan biosynthesis. Functionally, cell wall formation. The chain is UDP-N-acetylmuramate--L-alanine ligase from Vibrio vulnificus (strain CMCP6).